A 274-amino-acid chain; its full sequence is MKKYLLGIGLILALIACKQNVSSLDEKNSVSVDLPGGMKVLVSKEKDKDGKYSLEATVDKLELKGTSDKNNGSGTLEGEKTDKSKVKLTIAEDLSKTTFEIFKEDGKTLVSKKVTLKDKSSTEEKFNEKGEISEKTIVRANGTRLEYTDIKSDGSGKAKEVLKDFTLEGTLAADGKTTLKVTEGTVVLSKNILKSGEITVALDDSDTTQATKKTGKWDSKTSTLTISVNSQKTKNLVFTKEDTITVQKYDSAGTNLEGKAVEITTLKELKDALK.

An N-terminal signal peptide occupies residues 1 to 16; that stretch reads MKKYLLGIGLILALIA. The N-palmitoyl cysteine moiety is linked to residue Cys-17. Cys-17 is lipidated: S-diacylglycerol cysteine.

It belongs to the OspA lipoprotein family.

The protein localises to the cell outer membrane. It localises to the cell surface. In Borreliella burgdorferi (Lyme disease spirochete), this protein is Outer surface protein A.